The chain runs to 170 residues: Shikimate kinase (170 aa).

15-20 (GAGKTT) lines the ATP pocket. A Mg(2+)-binding site is contributed by Thr-19. 3 residues coordinate substrate: Asp-37, Arg-61, and Gly-83. Residue Arg-121 coordinates ATP. Arg-140 contacts substrate.

The protein belongs to the shikimate kinase family. As to quaternary structure, monomer. Requires Mg(2+) as cofactor.

The protein localises to the cytoplasm. It carries out the reaction shikimate + ATP = 3-phosphoshikimate + ADP + H(+). It participates in metabolic intermediate biosynthesis; chorismate biosynthesis; chorismate from D-erythrose 4-phosphate and phosphoenolpyruvate: step 5/7. Its function is as follows. Catalyzes the specific phosphorylation of the 3-hydroxyl group of shikimic acid using ATP as a cosubstrate. This Neisseria meningitidis serogroup C (strain 053442) protein is Shikimate kinase.